A 145-amino-acid polypeptide reads, in one-letter code: D-aminoacyl-tRNA deacylase (145 aa).

A Gly-cisPro motif, important for rejection of L-amino acids motif is present at residues 137–138; it reads GP.

The protein belongs to the DTD family. Homodimer.

It localises to the cytoplasm. The catalysed reaction is glycyl-tRNA(Ala) + H2O = tRNA(Ala) + glycine + H(+). It carries out the reaction a D-aminoacyl-tRNA + H2O = a tRNA + a D-alpha-amino acid + H(+). An aminoacyl-tRNA editing enzyme that deacylates mischarged D-aminoacyl-tRNAs. Also deacylates mischarged glycyl-tRNA(Ala), protecting cells against glycine mischarging by AlaRS. Acts via tRNA-based rather than protein-based catalysis; rejects L-amino acids rather than detecting D-amino acids in the active site. By recycling D-aminoacyl-tRNA to D-amino acids and free tRNA molecules, this enzyme counteracts the toxicity associated with the formation of D-aminoacyl-tRNA entities in vivo and helps enforce protein L-homochirality. The protein is D-aminoacyl-tRNA deacylase of Salmonella paratyphi A (strain AKU_12601).